The chain runs to 319 residues: Cytochrome c biogenesis protein CcsA (319 aa).

A run of 8 helical transmembrane segments spans residues I9 to L29, T48 to L68, L71 to F91, L98 to L118, M143 to I163, I225 to N245, E258 to R275, and A286 to L306.

The protein belongs to the CcmF/CycK/Ccl1/NrfE/CcsA family. In terms of assembly, may interact with Ccs1.

It localises to the plastid. Its subcellular location is the chloroplast thylakoid membrane. Functionally, required during biogenesis of c-type cytochromes (cytochrome c6 and cytochrome f) at the step of heme attachment. In Eucalyptus globulus subsp. globulus (Tasmanian blue gum), this protein is Cytochrome c biogenesis protein CcsA.